We begin with the raw amino-acid sequence, 299 residues long: Probable alpha-L-glutamate ligase (299 aa).

The ATP-grasp domain maps to 111–293; it reads LQALAAANIA…VATQMIAYLE (183 aa). ATP is bound by residues Lys147, 184–185, Asp193, and 217–219; these read DF and RAN. Positions 254, 266, and 268 each coordinate Mg(2+). Mn(2+) contacts are provided by Asp254, Glu266, and Asn268.

The protein belongs to the RimK family. Requires Mg(2+) as cofactor. Mn(2+) serves as cofactor.

This is Probable alpha-L-glutamate ligase from Mannheimia succiniciproducens (strain KCTC 0769BP / MBEL55E).